A 92-amino-acid polypeptide reads, in one-letter code: Large ribosomal subunit protein eL43z (92 aa).

Residues 39–60 form a C4-type zinc finger; it reads CEFCGKFAVKRKAVGIWGCKDC.

It belongs to the eukaryotic ribosomal protein eL43 family.

The polypeptide is Large ribosomal subunit protein eL43z (Oryza sativa subsp. japonica (Rice)).